The sequence spans 545 residues: CTP synthase (545 aa).

Residues 1-266 (MTTNYIFVTG…DDYICKRFSL (266 aa)) form an amidoligase domain region. Ser14 serves as a coordination point for CTP. Ser14 is a binding site for UTP. Residues 15-20 (SLGKGI) and Asp72 contribute to the ATP site. Residues Asp72 and Glu140 each coordinate Mg(2+). CTP-binding positions include 147–149 (DIE), 187–192 (KTKPTQ), and Lys223. Residues 187–192 (KTKPTQ) and Lys223 contribute to the UTP site. Residue 239 to 241 (KDV) coordinates ATP. The 252-residue stretch at 291 to 542 (TIGMVGKYIE…VKAASEYQKR (252 aa)) folds into the Glutamine amidotransferase type-1 domain. Gly352 contacts L-glutamine. Cys379 acts as the Nucleophile; for glutamine hydrolysis in catalysis. Residues 380–383 (LGMQ), Glu403, and Arg470 each bind L-glutamine. Residues His515 and Glu517 contribute to the active site.

The protein belongs to the CTP synthase family. As to quaternary structure, homotetramer.

It catalyses the reaction UTP + L-glutamine + ATP + H2O = CTP + L-glutamate + ADP + phosphate + 2 H(+). The enzyme catalyses L-glutamine + H2O = L-glutamate + NH4(+). It carries out the reaction UTP + NH4(+) + ATP = CTP + ADP + phosphate + 2 H(+). The protein operates within pyrimidine metabolism; CTP biosynthesis via de novo pathway; CTP from UDP: step 2/2. Its activity is regulated as follows. Allosterically activated by GTP, when glutamine is the substrate; GTP has no effect on the reaction when ammonia is the substrate. The allosteric effector GTP functions by stabilizing the protein conformation that binds the tetrahedral intermediate(s) formed during glutamine hydrolysis. Inhibited by the product CTP, via allosteric rather than competitive inhibition. Functionally, catalyzes the ATP-dependent amination of UTP to CTP with either L-glutamine or ammonia as the source of nitrogen. Regulates intracellular CTP levels through interactions with the four ribonucleotide triphosphates. The protein is CTP synthase of Cronobacter sakazakii (strain ATCC BAA-894) (Enterobacter sakazakii).